A 123-amino-acid polypeptide reads, in one-letter code: Fluoride-specific ion channel FluC (123 aa).

4 consecutive transmembrane segments (helical) span residues 6–26, 38–58, 68–88, and 100–120; these read VALV…LSGV, LLVN…IFWG, FLGT…YETF, and LLNI…GFVL. Residues G75 and S78 each contribute to the Na(+) site.

This sequence belongs to the fluoride channel Fluc/FEX (TC 1.A.43) family.

The protein resides in the cell membrane. The catalysed reaction is fluoride(in) = fluoride(out). Its activity is regulated as follows. Na(+) is not transported, but it plays an essential structural role and its presence is essential for fluoride channel function. Fluoride-specific ion channel. Important for reducing fluoride concentration in the cell, thus reducing its toxicity. The chain is Fluoride-specific ion channel FluC from Pyrococcus furiosus (strain ATCC 43587 / DSM 3638 / JCM 8422 / Vc1).